A 257-amino-acid polypeptide reads, in one-letter code: Type III pantothenate kinase (257 aa).

Residue 6-13 participates in ATP binding; that stretch reads DCGNTNTV. 107-110 is a binding site for substrate; it reads GPDR. Asp-109 functions as the Proton acceptor in the catalytic mechanism. Asp-129 contributes to the K(+) binding site. Thr-132 is a binding site for ATP. Thr-184 serves as a coordination point for substrate.

This sequence belongs to the type III pantothenate kinase family. Homodimer. Requires NH4(+) as cofactor. It depends on K(+) as a cofactor.

Its subcellular location is the cytoplasm. It carries out the reaction (R)-pantothenate + ATP = (R)-4'-phosphopantothenate + ADP + H(+). It functions in the pathway cofactor biosynthesis; coenzyme A biosynthesis; CoA from (R)-pantothenate: step 1/5. Its function is as follows. Catalyzes the phosphorylation of pantothenate (Pan), the first step in CoA biosynthesis. This is Type III pantothenate kinase from Cereibacter sphaeroides (strain ATCC 17029 / ATH 2.4.9) (Rhodobacter sphaeroides).